Reading from the N-terminus, the 1331-residue chain is uncharacterized protein (1331 aa).

Helical transmembrane passes span 373 to 393 (VIGV…SLIV), 487 to 507 (ALFL…LILI), 534 to 554 (LLIF…SFGI), 579 to 599 (VVGL…ISLL), 653 to 673 (LVFL…SFAT), 1206 to 1226 (VIAV…TTLI), 1255 to 1275 (IPLF…LIAL), and 1297 to 1317 (AIGS…LNWL).

The protein belongs to the ABC-4 integral membrane protein family.

The protein resides in the cell membrane. This is an uncharacterized protein from Mycoplasma genitalium (strain ATCC 33530 / DSM 19775 / NCTC 10195 / G37) (Mycoplasmoides genitalium).